The primary structure comprises 316 residues: MKVLWVALVITLLAGCQAEVEPEPEPEVQLGREWPRWQGSQPWEQALGRFWDYLRWVQTLSDQVQEELLSTQVIQELTVLMDETMKEVKAYREELEGQLGPIAQETQARVSKELQAAQARLASDMEDVRSRVAQYRSEVQAMMGQTTDELRGRLASHLRKLRKRLLRDAEDLQKRLAVYRAGALEGSERSVSAIRERLGPLVEQGRVRAATVGTLASQTLRERAEAWHQKLRGRMEEMGTQARDHLEEMREQLEEVRAKVEEQGSQMRLQAEAFQARLKSWFEPLVEDMQRQWAGLVEKVQLAMATSPTSAPIENS.

The first 18 residues, 1-18, serve as a signal peptide directing secretion; sequence MKVLWVALVITLLAGCQA. 8 consecutive repeat copies span residues 79–100, 101–122, 123–144, 145–166, 167–188, 189–210, 211–232, and 233–254. Residues 79–254 are 8 X 22 AA approximate tandem repeats; that stretch reads VLMDETMKEV…HLEEMREQLE (176 aa). Methionine 142 bears the Methionine sulfoxide mark. The interval 157–167 is LDL and other lipoprotein receptors binding; sequence HLRKLRKRLLR. Heparin is bound at residue 161–164; the sequence is LRKR. The interval 209-289 is lipid-binding and lipoprotein association; it reads AATVGTLASQ…SWFEPLVEDM (81 aa). A heparin-binding site is contributed by 228–235; it reads HQKLRGRM. The homooligomerization stretch occupies residues 265–316; it reads SQMRLQAEAFQARLKSWFEPLVEDMQRQWAGLVEKVQLAMATSPTSAPIENS. The segment at 277-289 is specificity for association with VLDL; sequence RLKSWFEPLVEDM.

This sequence belongs to the apolipoprotein A1/A4/E family. As to quaternary structure, homotetramer. May interact with ABCA1; functionally associated with ABCA1 in the biogenesis of HDLs. May interact with APP/A4 amyloid-beta peptide; the interaction is extremely stable in vitro but its physiological significance is unclear. May interact with MAPT. May interact with MAP2. In the cerebrospinal fluid, interacts with secreted SORL1. Interacts with PMEL; this allows the loading of PMEL luminal fragment on ILVs to induce fibril nucleation. Post-translationally, APOE exists as multiple glycosylated and sialylated glycoforms within cells and in plasma. The extent of glycosylation and sialylation are tissue and context specific. Glycated in plasma VLDL. In terms of processing, phosphorylated by FAM20C in the extracellular medium.

It localises to the secreted. It is found in the extracellular space. Its subcellular location is the extracellular matrix. The protein localises to the extracellular vesicle. The protein resides in the endosome. It localises to the multivesicular body. Its function is as follows. APOE is an apolipoprotein, a protein associating with lipid particles, that mainly functions in lipoprotein-mediated lipid transport between organs via the plasma and interstitial fluids. APOE is a core component of plasma lipoproteins and is involved in their production, conversion and clearance. Apolipoproteins are amphipathic molecules that interact both with lipids of the lipoprotein particle core and the aqueous environment of the plasma. As such, APOE associates with chylomicrons, chylomicron remnants, very low density lipoproteins (VLDL) and intermediate density lipoproteins (IDL) but shows a preferential binding to high-density lipoproteins (HDL). It also binds a wide range of cellular receptors including the LDL receptor/LDLR and the very low-density lipoprotein receptor/VLDLR that mediate the cellular uptake of the APOE-containing lipoprotein particles. Finally, APOE also has a heparin-binding activity and binds heparan-sulfate proteoglycans on the surface of cells, a property that supports the capture and the receptor-mediated uptake of APOE-containing lipoproteins by cells. In Orcinus orca (Killer whale), this protein is Apolipoprotein E (APOE).